A 356-amino-acid chain; its full sequence is Tyrosine recombinase XerS (356 aa).

Residues 16–121 form the Core-binding (CB) domain; that stretch reads IMPWYVLDYY…ALSSLYKYLT (106 aa). Residues 169-354 enclose the Tyr recombinase domain; sequence AFLDYVDKEY…VNDEQKNALD (186 aa). Catalysis depends on residues Arg-210, Lys-234, His-306, Arg-309, and His-332. Tyr-341 functions as the O-(3'-phospho-DNA)-tyrosine intermediate in the catalytic mechanism.

The protein belongs to the 'phage' integrase family. XerS subfamily.

The protein localises to the cytoplasm. With respect to regulation, ftsK is required for recombination. In terms of biological role, site-specific tyrosine recombinase, which acts by catalyzing the cutting and rejoining of the recombining DNA molecules. Essential to convert dimers of the bacterial chromosome into monomers to permit their segregation at cell division. The sequence is that of Tyrosine recombinase XerS from Streptococcus pyogenes serotype M1.